The primary structure comprises 399 residues: Lipoyl synthase, mitochondrial (399 aa).

The transit peptide at 1-30 directs the protein to the mitochondrion; that stretch reads MRAVLELTRRRARNARFARARAVVGARARA. A compositionally biased stretch (basic and acidic residues) spans 31 to 41; sequence ADAQELRDDSK. The segment at 31–58 is disordered; sequence ADAQELRDDSKGGSSVDKATSTAAEARE. [4Fe-4S] cluster-binding residues include cysteine 131, cysteine 136, cysteine 142, cysteine 162, cysteine 166, cysteine 169, and serine 375. Residues 145–364 form the Radical SAM core domain; sequence GGDGKTATAT…QEIAEEMGFL (220 aa).

This sequence belongs to the radical SAM superfamily. Lipoyl synthase family. Requires [4Fe-4S] cluster as cofactor.

The protein resides in the mitochondrion. It carries out the reaction [[Fe-S] cluster scaffold protein carrying a second [4Fe-4S](2+) cluster] + N(6)-octanoyl-L-lysyl-[protein] + 2 oxidized [2Fe-2S]-[ferredoxin] + 2 S-adenosyl-L-methionine + 4 H(+) = [[Fe-S] cluster scaffold protein] + N(6)-[(R)-dihydrolipoyl]-L-lysyl-[protein] + 4 Fe(3+) + 2 hydrogen sulfide + 2 5'-deoxyadenosine + 2 L-methionine + 2 reduced [2Fe-2S]-[ferredoxin]. The protein operates within protein modification; protein lipoylation via endogenous pathway; protein N(6)-(lipoyl)lysine from octanoyl-[acyl-carrier-protein]: step 2/2. In terms of biological role, catalyzes the radical-mediated insertion of two sulfur atoms into the C-6 and C-8 positions of the octanoyl moiety bound to the lipoyl domains of lipoate-dependent enzymes, thereby converting the octanoylated domains into lipoylated derivatives. In Ostreococcus lucimarinus (strain CCE9901), this protein is Lipoyl synthase, mitochondrial.